The sequence spans 445 residues: Protein cereblon (445 aa).

The segment at 1–50 (MAAEEGGDGRRNMGNPPPPAPAESEEEDDNEMEVEDQDGKEAEKPNMINF) is disordered. The span at 23-36 (ESEEEDDNEMEVED) shows a compositional bias: acidic residues. The Lon N-terminal domain maps to 82 to 321 (IPVLPHVMVM…CELDIMNKCT (240 aa)). The CULT domain occupies 320–428 (CTSLCCKQCQ…LTRSALLPRI (109 aa)). Zn(2+) is bound by residues C325 and C328. (S)-thalidomide contacts are provided by H380, W382, and W388. Positions 393 and 396 each coordinate Zn(2+).

Belongs to the CRBN family. As to quaternary structure, component of a DCX (DDB1-CUL4-X-box) protein ligase complex. Interacts directly with DDB1.

It localises to the cytoplasm. It is found in the nucleus. Its pathway is protein modification; protein ubiquitination. Substrate recognition component of a DCX (DDB1-CUL4-X-box) E3 protein ligase complex that mediates the ubiquitination and subsequent proteasomal degradation of target proteins, such as MEIS2. Normal degradation of key regulatory proteins is required for normal limb outgrowth and expression of the fibroblast growth factor FGF8. Maintains presynaptic glutamate release and consequently cognitive functions, such as memory and learning, by negatively regulating large-conductance calcium-activated potassium (BK) channels in excitatory neurons. Likely to function by regulating the assembly and neuronal surface expression of BK channels via its interaction with KCNT1. May also be involved in regulating anxiety-like behaviors via a BK channel-independent mechanism. This Gallus gallus (Chicken) protein is Protein cereblon (CRBN).